The chain runs to 200 residues: MPKIKICGLKREEDVSFVNIAKPDYAGFVFAGVKRKIDFNTAVRFRSLLDDTIQSVGVFVNDKIDNIVNLCEDKTIDLVQLHGGEDESYIGRLKERIKKPVVKAVRVKDKIYSAATKADFMLFDTYSSFEYGGSGKIFDWDLLKEFRNPFFLAGGLNRDNIAEAVKKLNPYCVDLSSGVETNGVKDLNKIIETVKILRSL.

It belongs to the TrpF family.

It carries out the reaction N-(5-phospho-beta-D-ribosyl)anthranilate = 1-(2-carboxyphenylamino)-1-deoxy-D-ribulose 5-phosphate. Its pathway is amino-acid biosynthesis; L-tryptophan biosynthesis; L-tryptophan from chorismate: step 3/5. The protein is N-(5'-phosphoribosyl)anthranilate isomerase of Endomicrobium trichonymphae.